The sequence spans 309 residues: Palmitoyltransferase ZDHHC19 (309 aa).

2 helical membrane-spanning segments follow: residues 29–49 (LFAA…FAFP) and 59–79 (WAFP…LVSL). Residues 112–162 (QWCPKCCFHRPPRTYHCPWCNICVEDFDHHCKWVNNCIGHRNFRFFMLLVL) form the DHHC domain. Residue Cys142 is the S-palmitoyl cysteine intermediate of the active site. 2 helical membrane-spanning segments follow: residues 160–180 (LVLS…IFLV) and 193–213 (IAIV…LLLL). The span at 280-294 (LHPPMSPSALNPPAP) shows a compositional bias: pro residues. The tract at residues 280-309 (LHPPMSPSALNPPAPTSGSLQSREGTPGAW) is disordered.

The protein belongs to the DHHC palmitoyltransferase family.

The protein resides in the golgi apparatus membrane. The protein localises to the cytoplasm. It is found in the perinuclear region. It catalyses the reaction L-cysteinyl-[protein] + hexadecanoyl-CoA = S-hexadecanoyl-L-cysteinyl-[protein] + CoA. Its function is as follows. Palmitoyltransferase that mediates palmitoylation oproteins, such as RRAS and SQSTM1. Catalyzes palmitoylation of RRAS, leading to increased cell viability. Acts as a positive regulator of autophagy by mediating palmitoylation of SQSTM1, promoting affinity between SQSTM1 and ATG8 proteins and recruitment of ubiquitinated cargo proteins to autophagosomes. Functionally, (Microbial infection) Promotes Chikungunya virus (CHIKV) replication by mediating viral nsp1 palmitoylation. The chain is Palmitoyltransferase ZDHHC19 from Homo sapiens (Human).